A 369-amino-acid chain; its full sequence is Peptide chain release factor 2 (369 aa).

An N5-methylglutamine modification is found at Gln251.

The protein belongs to the prokaryotic/mitochondrial release factor family. In terms of processing, methylated by PrmC. Methylation increases the termination efficiency of RF2.

The protein resides in the cytoplasm. Peptide chain release factor 2 directs the termination of translation in response to the peptide chain termination codons UGA and UAA. This Chlamydia muridarum (strain MoPn / Nigg) protein is Peptide chain release factor 2 (prfB).